A 307-amino-acid chain; its full sequence is CRISPR-associated endonuclease Cas1 2 (307 aa).

Mn(2+) contacts are provided by glutamate 142, histidine 206, and glutamate 221.

This sequence belongs to the CRISPR-associated endonuclease Cas1 family. In terms of assembly, homodimer, forms a heterotetramer with a Cas2 homodimer. Forms oligomers, probably binds nucleic acids as a homodimer. The cofactor is Mg(2+). Mn(2+) is required as a cofactor.

In terms of biological role, CRISPR (clustered regularly interspaced short palindromic repeat), is an adaptive immune system that provides protection against mobile genetic elements (viruses, transposable elements and conjugative plasmids). CRISPR clusters contain spacers, sequences complementary to antecedent mobile elements, and target invading nucleic acids. CRISPR clusters are transcribed and processed into CRISPR RNA (crRNA). Acts as a dsDNA endonuclease. Involved in the integration of spacer DNA into the CRISPR cassette. Its function is as follows. In vitro catalyzes a concerted transesterification reaction on branched DNA, as would be expected during integration of protospacers into the CRISPR leader sequence; Cas2 is not required in vitro. This reaction requires a 3'-OH group at the branch point. Binds ss- and dsDNA and ss- and dsRNA with approximately equal affinity. May be able to anneal complementary DNA strands. The sequence is that of CRISPR-associated endonuclease Cas1 2 from Saccharolobus solfataricus (strain ATCC 35092 / DSM 1617 / JCM 11322 / P2) (Sulfolobus solfataricus).